The chain runs to 420 residues: E3 ubiquitin protein ligase DRIP2 (420 aa).

The segment at 20-61 adopts an RING-type zinc-finger fold; sequence CPLCDKLLRDATTISECLHTFCRKCIYEKITEDEIESCPVCD. The segment covering 113 to 123 has biased composition (polar residues); it reads ISSLVVSTPRV. Disordered regions lie at residues 113–201 and 226–289; these read ISSL…KDVD and DPKS…TFGD. The span at 154-165 shows a compositional bias: basic and acidic residues; that stretch reads KKEEEFGDDHVE. Polar residues-rich tracts occupy residues 166–194 and 232–242; these read SASS…SLSN and GNASHNDVQGS. Residues 244 to 253 are compositionally biased toward basic residues; that stretch reads TKTKDHKRKC. Residues 260–273 show a composition bias toward polar residues; that stretch reads SNNGDPTTSETATL. The segment covering 274-284 has biased composition (basic residues); sequence KRTRRTRRKRS.

Interacts with DREB2A. In terms of processing, auto-ubiquitinated. Expressed in roots, leaves and flowers.

The enzyme catalyses S-ubiquitinyl-[E2 ubiquitin-conjugating enzyme]-L-cysteine + [acceptor protein]-L-lysine = [E2 ubiquitin-conjugating enzyme]-L-cysteine + N(6)-ubiquitinyl-[acceptor protein]-L-lysine.. The protein operates within protein modification; protein ubiquitination. In terms of biological role, E3 ubiquitin-protein ligase that acts as a negative regulator of the response to water stress. Mediates ubiquitination and subsequent proteasomal degradation of the drought-induced transcriptional activator DREB2A. Functionally redundant with DRIP1. The polypeptide is E3 ubiquitin protein ligase DRIP2 (DRIP2) (Arabidopsis thaliana (Mouse-ear cress)).